The primary structure comprises 753 residues: Enhancer of polycomb-like protein 1 (753 aa).

Disordered stretches follow at residues 1-75 (MAAA…RDLH) and 429-490 (VRTE…LPPA). The segment covering 46–71 (LDSNELEPSQVHHLNSNASSSSTQQP) has biased composition (polar residues). Basic and acidic residues predominate over residues 429 to 449 (VRTEDEEREKKREKKKQDQEL). Residues 450–463 (ALKQQQALQQQQQQ) are compositionally biased toward low complexity.

Belongs to the enhancer of polycomb family. In terms of assembly, component of the NuA4 histone acetyltransferase complex.

The protein localises to the nucleus. In terms of biological role, component of the NuA4 histone acetyltransferase complex which is involved in transcriptional activation of selected genes principally by acetylation of nucleosomal histone H4 and H2A. The NuA4 complex is also involved in DNA repair. Involved in gene silencing by neighboring heterochromatin, blockage of the silencing spreading along the chromosome, and required for cell cycle progression through G2/M. This Candida albicans (strain SC5314 / ATCC MYA-2876) (Yeast) protein is Enhancer of polycomb-like protein 1 (EPL1).